The sequence spans 934 residues: Intimin (934 aa).

The first 39 residues, 1 to 39 (MITHGCYTRTRHKHKLKKTLIMLSAGLGLFFYVNQNSFA), serve as a signal peptide directing secretion. Positions 40–153 (NGENYFKLGS…KLTKMSPDVT (114 aa)) are peptidoglycan-binding. A sufficient for homodimerization region spans residues 40–153 (NGENYFKLGS…KLTKMSPDVT (114 aa)). The interval 40–212 (NGENYFKLGS…LQAWLQHYGT (173 aa)) is required for periplasmic localization. A LysM domain is found at 63-112 (LFYTLKTGETVADLSKSQDINLSTIWSLNKHLYSSESEMMKAAPGQQIIL). Residues 210–411 (YGTAEVNLQS…LYSMQFRYQF (202 aa)) are inverse autotransporter. Positions 402–411 (LYSMQFRYQF) are signature sequence for beta-barrel assembly machinery (BAM), which recognizes the unfolded beta-barrel in the periplasm. The interval 437 to 449 (LVQRNNNIILEYK) is minimum linker residues necessary for formation of a heat-modifiable beta-barrel. Big-1 domains are found at residues 560-653 (VTDF…VIFF) and 660-753 (ITEI…VTFF). An intimin receptor Tir-binding region spans residues 747–934 (ATEVTFFDEL…TPNVYAVCVE (188 aa)). The BIG2 domain maps to 787–833 (ASGGDGTYSWYSENTSIATVDASGKVTLNGKGSVVIKATSGDKQTVS). Cys-858 and Cys-932 are oxidised to a cystine.

It belongs to the intimin/invasin family. In terms of assembly, homodimer. Interacts with Tir.

The protein localises to the cell outer membrane. In terms of biological role, an inverse autotransporter. Adhesin, which mediates attachment to the human intestine epithelial cells. Necessary for the production of attaching and effacing lesions on infected human tissue culture cells. Anchored to the outer membrane by binding to peptidoglycan (PGN) via its periplasmic domain, thus helping in receptor interactions during host invasion. PGN-binding may also aid in resisting mechanical and chemical stress during transit of the bacterium through the gastrointestinal tract of the host. In Escherichia coli O157:H7, this protein is Intimin.